We begin with the raw amino-acid sequence, 269 residues long: Probable aquaporin TIP5-1 (269 aa).

5 consecutive transmembrane segments (helical) span residues 19–39, 54–74, 84–104, 139–159, and 177–197; these read AYFA…GSTI, SLMA…FIAA, AVTF…IFYW, FGAG…VHVA, and ALGA…AGSL. Residues 82 to 84 carry the NPA 1 motif; sequence NPA. The NPA 2 signature appears at 203 to 205; the sequence is NPA. Residues 223-243 traverse the membrane as a helical segment; that stretch reads YWAGPMVGAAVAALVHQALVF.

This sequence belongs to the MIP/aquaporin (TC 1.A.8) family. TIP (TC 1.A.8.10) subfamily. As to expression, expressed in leaves and anthers, and at lower levels in roots.

It localises to the vacuole membrane. In terms of biological role, aquaporins facilitate the transport of water and small neutral solutes across cell membranes. May be involved in transport from the vacuolar compartment to the cytoplasm. In Oryza sativa subsp. japonica (Rice), this protein is Probable aquaporin TIP5-1 (TIP5;1).